Consider the following 337-residue polypeptide: Beta-hexosaminidase (337 aa).

Substrate-binding positions include Asp-62, Arg-70, Arg-133, and 163–164 (KH). The active-site Proton donor/acceptor is His-176. Asp-248 (nucleophile) is an active-site residue.

The protein belongs to the glycosyl hydrolase 3 family. NagZ subfamily.

Its subcellular location is the cytoplasm. The catalysed reaction is Hydrolysis of terminal non-reducing N-acetyl-D-hexosamine residues in N-acetyl-beta-D-hexosaminides.. It functions in the pathway cell wall biogenesis; peptidoglycan recycling. Its function is as follows. Plays a role in peptidoglycan recycling by cleaving the terminal beta-1,4-linked N-acetylglucosamine (GlcNAc) from peptide-linked peptidoglycan fragments, giving rise to free GlcNAc, anhydro-N-acetylmuramic acid and anhydro-N-acetylmuramic acid-linked peptides. The chain is Beta-hexosaminidase from Psychromonas ingrahamii (strain DSM 17664 / CCUG 51855 / 37).